A 319-amino-acid chain; its full sequence is Aspartate carbamoyltransferase catalytic subunit (319 aa).

Arg-57 and Thr-58 together coordinate carbamoyl phosphate. An L-aspartate-binding site is contributed by Lys-85. The carbamoyl phosphate site is built by Arg-107, His-135, and Gln-138. Residues Arg-168 and Arg-222 each coordinate L-aspartate. Carbamoyl phosphate is bound by residues Gly-263 and Pro-264.

Belongs to the aspartate/ornithine carbamoyltransferase superfamily. ATCase family. In terms of assembly, heterododecamer (2C3:3R2) of six catalytic PyrB chains organized as two trimers (C3), and six regulatory PyrI chains organized as three dimers (R2).

The catalysed reaction is carbamoyl phosphate + L-aspartate = N-carbamoyl-L-aspartate + phosphate + H(+). The protein operates within pyrimidine metabolism; UMP biosynthesis via de novo pathway; (S)-dihydroorotate from bicarbonate: step 2/3. In terms of biological role, catalyzes the condensation of carbamoyl phosphate and aspartate to form carbamoyl aspartate and inorganic phosphate, the committed step in the de novo pyrimidine nucleotide biosynthesis pathway. This Paracoccus denitrificans (strain Pd 1222) protein is Aspartate carbamoyltransferase catalytic subunit.